Consider the following 113-residue polypeptide: Non-structural protein 1 (113 aa).

The protein belongs to the pneumovirus non-structural protein 1 family.

The protein localises to the host cytoplasm. It localises to the host mitochondrion. In terms of biological role, may play a minor role in antagonizing the type I IFN-mediated antiviral response. Additionally, NS1 may serve some inhibitory role in viral transcription and RNA replication. The polypeptide is Non-structural protein 1 (1C) (Mus musculus (Mouse)).